Here is a 692-residue protein sequence, read N- to C-terminus: Elongation factor G (692 aa).

The tr-type G domain maps to 8 to 282 (AKTRNIGIMA…AVIAYLPSPL (275 aa)). Residues 17–24 (AHVDAGKT), 81–85 (DTPGH), and 135–138 (NKMD) contribute to the GTP site.

The protein belongs to the TRAFAC class translation factor GTPase superfamily. Classic translation factor GTPase family. EF-G/EF-2 subfamily.

The protein resides in the cytoplasm. In terms of biological role, catalyzes the GTP-dependent ribosomal translocation step during translation elongation. During this step, the ribosome changes from the pre-translocational (PRE) to the post-translocational (POST) state as the newly formed A-site-bound peptidyl-tRNA and P-site-bound deacylated tRNA move to the P and E sites, respectively. Catalyzes the coordinated movement of the two tRNA molecules, the mRNA and conformational changes in the ribosome. This Streptococcus equi subsp. equi (strain 4047) protein is Elongation factor G.